The chain runs to 249 residues: Anamorsin homolog (249 aa).

The interval 1 to 130 (MEQFKDLQKS…ETGSAARLSF (130 aa)) is N-terminal SAM-like domain. Residues 131 to 161 (AKKAAGVNVWKISGDDEELIDEEDLLDEADK) are linker. Residues C172, C181, C184, and C186 each contribute to the [2Fe-2S] cluster site. Positions 172 to 186 (CSTTGKRKACKNCSC) are fe-S binding site A. [4Fe-4S] cluster-binding residues include C210, C213, C221, and C224. 2 consecutive short sequence motifs (cx2C motif) follow at residues 210–213 (CGNC) and 221–224 (CSTC). The interval 210 to 224 (CGNCYLGDAFRCSTC) is fe-S binding site B.

It belongs to the anamorsin family. As to quaternary structure, monomer. The cofactor is [2Fe-2S] cluster. [4Fe-4S] cluster is required as a cofactor.

It localises to the cytoplasm. The protein localises to the mitochondrion intermembrane space. Its function is as follows. Component of the cytosolic iron-sulfur (Fe-S) protein assembly (CIA) machinery. Required for the maturation of extramitochondrial Fe-S proteins. Part of an electron transfer chain functioning in an early step of cytosolic Fe-S biogenesis, facilitating the de novo assembly of a [4Fe-4S] cluster on the cytosolic Fe-S scaffold complex. Electrons are transferred from NADPH via a FAD- and FMN-containing diflavin oxidoreductase. Together with the diflavin oxidoreductase, also required for the assembly of the diferric tyrosyl radical cofactor of ribonucleotide reductase (RNR), probably by providing electrons for reduction during radical cofactor maturation in the catalytic small subunit. In Drosophila grimshawi (Hawaiian fruit fly), this protein is Anamorsin homolog.